Reading from the N-terminus, the 124-residue chain is Small ribosomal subunit protein uS12 (124 aa).

Residues 1–25 are disordered; sequence MARINQLVRKPRRARAKKSDVPALE. D89 carries the 3-methylthioaspartic acid modification. Positions 103–124 are disordered; the sequence is DTAGVSGRRRGRSKYGEKKPKE.

This sequence belongs to the universal ribosomal protein uS12 family. Part of the 30S ribosomal subunit. Contacts proteins S8 and S17. May interact with IF1 in the 30S initiation complex.

In terms of biological role, with S4 and S5 plays an important role in translational accuracy. Its function is as follows. Interacts with and stabilizes bases of the 16S rRNA that are involved in tRNA selection in the A site and with the mRNA backbone. Located at the interface of the 30S and 50S subunits, it traverses the body of the 30S subunit contacting proteins on the other side and probably holding the rRNA structure together. The combined cluster of proteins S8, S12 and S17 appears to hold together the shoulder and platform of the 30S subunit. This is Small ribosomal subunit protein uS12 from Coxiella burnetii (strain Dugway 5J108-111).